Consider the following 312-residue polypeptide: uncharacterized protein (312 aa).

This is an uncharacterized protein from Saccharomyces cerevisiae (strain ATCC 204508 / S288c) (Baker's yeast).